The following is a 407-amino-acid chain: Phosphopentomutase (407 aa).

Asp10, Asp306, His311, Asp347, His348, and His359 together coordinate Mn(2+).

This sequence belongs to the phosphopentomutase family. Requires Mn(2+) as cofactor.

The protein localises to the cytoplasm. It carries out the reaction 2-deoxy-alpha-D-ribose 1-phosphate = 2-deoxy-D-ribose 5-phosphate. It catalyses the reaction alpha-D-ribose 1-phosphate = D-ribose 5-phosphate. Its pathway is carbohydrate degradation; 2-deoxy-D-ribose 1-phosphate degradation; D-glyceraldehyde 3-phosphate and acetaldehyde from 2-deoxy-alpha-D-ribose 1-phosphate: step 1/2. Isomerase that catalyzes the conversion of deoxy-ribose 1-phosphate (dRib-1-P) and ribose 1-phosphate (Rib-1-P) to deoxy-ribose 5-phosphate (dRib-5-P) and ribose 5-phosphate (Rib-5-P), respectively. The chain is Phosphopentomutase from Erwinia tasmaniensis (strain DSM 17950 / CFBP 7177 / CIP 109463 / NCPPB 4357 / Et1/99).